We begin with the raw amino-acid sequence, 1937 residues long: Myosin-8 (1937 aa).

Residues 35–84 (DAKTSVFVAEPKESYVKSTIQSKEGGKVTVKTEGGATLTVREDQVFPMNP) enclose the Myosin N-terminal SH3-like domain. Phosphothreonine is present on residues threonine 66 and threonine 71. A Myosin motor domain is found at 88 to 781 (DKIEDMAMMT…LLGLLEEMRD (694 aa)). Lysine 132 is subject to N6,N6,N6-trimethyllysine. Position 181-188 (181-188 (GESGAGKT)) interacts with ATP. Tyrosine 389 is modified (phosphotyrosine). Residue serine 392 is modified to Phosphoserine. Threonine 419 bears the Phosphothreonine mark. Phosphotyrosine is present on tyrosine 424. Serine 625 carries the post-translational modification Phosphoserine. Residues 658-680 (LNKLMTNLRSTHPHFVRCIIPNE) form an actin-binding region. Histidine 756 carries the pros-methylhistidine modification. The tract at residues 760–774 (KFGHTKVFFKAGLLG) is actin-binding. The IQ domain occupies 781–813 (DEKLAQIITRTQAVCRGFLMRVEYQKMLQRREA). Positions 842 to 1937 (LLKSAETEKE…REVHTKISAE (1096 aa)) form a coiled coil. Phosphoserine occurs at positions 1091 and 1095. Residues 1126-1146 (EAERASRAKAEKQRSDLSREL) are disordered. Basic and acidic residues predominate over residues 1127–1146 (AERASRAKAEKQRSDLSREL). Serine 1161, serine 1236, serine 1242, and serine 1260 each carry phosphoserine. Residues threonine 1264 and threonine 1285 each carry the phosphothreonine modification. 3 positions are modified to phosphoserine: serine 1291, serine 1302, and serine 1305. Tyrosine 1463 is subject to Phosphotyrosine. Residue threonine 1466 is modified to Phosphothreonine. Serine 1473 bears the Phosphoserine mark. Tyrosine 1491 carries the post-translational modification Phosphotyrosine. Serine 1494 is modified (phosphoserine). Threonine 1500 carries the post-translational modification Phosphothreonine. Position 1513 is a phosphoserine (serine 1513). The residue at position 1516 (threonine 1516) is a Phosphothreonine. Serine 1553, serine 1573, serine 1602, serine 1713, and serine 1725 each carry phosphoserine. The residue at position 1729 (threonine 1729) is a Phosphothreonine. Serine 1738 is modified (phosphoserine).

This sequence belongs to the TRAFAC class myosin-kinesin ATPase superfamily. Myosin family. As to quaternary structure, muscle myosin is a hexameric protein that consists of 2 heavy chain subunits (MHC), 2 alkali light chain subunits (MLC) and 2 regulatory light chain subunits (MLC-2).

It is found in the cytoplasm. The protein resides in the myofibril. In terms of biological role, muscle contraction. The sequence is that of Myosin-8 (MYH8) from Homo sapiens (Human).